Reading from the N-terminus, the 590-residue chain is Pescadillo homolog (590 aa).

The interval 297-318 is disordered; the sequence is AKADAGEEEEVEEEEEVEDDGL. Residues 302–318 show a composition bias toward acidic residues; it reads GEEEEVEEEEEVEDDGL. The 110-residue stretch at 337 to 446 folds into the BRCT domain; the sequence is TAGQLFSNFT…KLLPVSEYAP (110 aa). Residues 452-590 form a disordered region; sequence AHLSPWGDAG…RKLNEKKEKR (139 aa). The span at 471 to 499 shows a compositional bias: acidic residues; that stretch reads DASDDDEDDEDIEVAPEDYDKDDEEEEAE. A coiled-coil region spans residues 489 to 589; that stretch reads YDKDDEEEEA…RRKLNEKKEK (101 aa). Composition is skewed to basic and acidic residues over residues 500–517, 532–547, and 567–577; these read AEAK…KGTK, DKMT…DKKL, and NDKKSDREAEL.

Belongs to the pescadillo family. Component of the NOP7 complex, composed of ERB1, NOP7 and YTM1. The complex is held together by ERB1, which interacts with NOP7 via its N-terminal domain and with YTM1 via a high-affinity interaction between the seven-bladed beta-propeller domains of the 2 proteins. The NOP7 complex associates with the 66S pre-ribosome.

It is found in the nucleus. The protein resides in the nucleolus. It localises to the nucleoplasm. In terms of biological role, component of the NOP7 complex, which is required for maturation of the 25S and 5.8S ribosomal RNAs and formation of the 60S ribosome. The sequence is that of Pescadillo homolog from Yarrowia lipolytica (strain CLIB 122 / E 150) (Yeast).